Reading from the N-terminus, the 298-residue chain is Thymidylate synthase (298 aa).

Residues R25 and 159–160 contribute to the dUMP site; that span reads RR. C179 functions as the Nucleophile in the catalytic mechanism. DUMP-binding positions include 200–203, N211, and 241–243; these read RSVD and HLY. (6R)-5,10-methylene-5,6,7,8-tetrahydrofolate is bound at residue D203. Residue A297 coordinates (6R)-5,10-methylene-5,6,7,8-tetrahydrofolate.

This sequence belongs to the thymidylate synthase family. Bacterial-type ThyA subfamily. Homodimer.

The protein localises to the cytoplasm. The enzyme catalyses dUMP + (6R)-5,10-methylene-5,6,7,8-tetrahydrofolate = 7,8-dihydrofolate + dTMP. The protein operates within pyrimidine metabolism; dTTP biosynthesis. Functionally, catalyzes the reductive methylation of 2'-deoxyuridine-5'-monophosphate (dUMP) to 2'-deoxythymidine-5'-monophosphate (dTMP) while utilizing 5,10-methylenetetrahydrofolate (mTHF) as the methyl donor and reductant in the reaction, yielding dihydrofolate (DHF) as a by-product. This enzymatic reaction provides an intracellular de novo source of dTMP, an essential precursor for DNA biosynthesis. This Cereibacter sphaeroides (strain ATCC 17029 / ATH 2.4.9) (Rhodobacter sphaeroides) protein is Thymidylate synthase.